The primary structure comprises 252 residues: C-type lectin domain family 2 member D3 (252 aa).

Residues 1-58 (MSSSAHLQDAPPLLSGTLTQNEGQTSLRQSSSCGPSAASASESLSGYTESRIPHSKVR) are disordered. Residues 1–78 (MSSSAHLQDA…ESRVKRYCCY (78 aa)) are Cytoplasmic-facing. The span at 16–29 (GTLTQNEGQTSLRQ) shows a compositional bias: polar residues. The segment covering 30-43 (SSSCGPSAASASES) has biased composition (low complexity). The chain crosses the membrane as a helical; Signal-anchor for type II membrane protein span at residues 79–99 (GGVITVVAIAIVVPLSVTLSV). The Extracellular portion of the chain corresponds to 100 to 252 (KQMEQTSINN…KPKKYISQSQ (153 aa)). The C-type lectin domain occupies 137-242 (YGNKCFYFSE…VYVERPWICS (106 aa)). Asparagine 150 carries N-linked (GlcNAc...) asparagine glycosylation. Residues cysteine 158 and cysteine 241 are joined by a disulfide bond.

It localises to the cell membrane. Lectin-type cell surface receptor. The polypeptide is C-type lectin domain family 2 member D3 (Clec2d3) (Rattus norvegicus (Rat)).